We begin with the raw amino-acid sequence, 288 residues long: DegV domain-containing protein DR_1903 (288 aa).

In terms of domain architecture, DegV spans isoleucine 2 to proline 280. Hexadecanoate is bound by residues threonine 59 and threonine 93.

Its function is as follows. May bind long-chain fatty acids, such as palmitate, and may play a role in lipid transport or fatty acid metabolism. This Deinococcus radiodurans (strain ATCC 13939 / DSM 20539 / JCM 16871 / CCUG 27074 / LMG 4051 / NBRC 15346 / NCIMB 9279 / VKM B-1422 / R1) protein is DegV domain-containing protein DR_1903.